We begin with the raw amino-acid sequence, 424 residues long: 3-isopropylmalate dehydratase large subunit 2 (424 aa).

[4Fe-4S] cluster is bound by residues Cys-299, Cys-359, and Cys-362.

It belongs to the aconitase/IPM isomerase family. LeuC type 2 subfamily. In terms of assembly, heterodimer of LeuC and LeuD. The cofactor is [4Fe-4S] cluster.

The enzyme catalyses (2R,3S)-3-isopropylmalate = (2S)-2-isopropylmalate. Its pathway is amino-acid biosynthesis; L-leucine biosynthesis; L-leucine from 3-methyl-2-oxobutanoate: step 2/4. Catalyzes the isomerization between 2-isopropylmalate and 3-isopropylmalate, via the formation of 2-isopropylmaleate. The sequence is that of 3-isopropylmalate dehydratase large subunit 2 from Rubrobacter xylanophilus (strain DSM 9941 / JCM 11954 / NBRC 16129 / PRD-1).